The sequence spans 184 residues: Elongation factor P (184 aa).

It belongs to the elongation factor P family.

It is found in the cytoplasm. The protein operates within protein biosynthesis; polypeptide chain elongation. Involved in peptide bond synthesis. Stimulates efficient translation and peptide-bond synthesis on native or reconstituted 70S ribosomes in vitro. Probably functions indirectly by altering the affinity of the ribosome for aminoacyl-tRNA, thus increasing their reactivity as acceptors for peptidyl transferase. The sequence is that of Elongation factor P from Variovorax paradoxus (strain S110).